The primary structure comprises 114 residues: Hydrogenase maturation factor HypA (114 aa).

Residue histidine 2 participates in Ni(2+) binding. The Zn(2+) site is built by cysteine 73, cysteine 76, cysteine 90, and cysteine 93.

It belongs to the HypA/HybF family.

In terms of biological role, involved in the maturation of [NiFe] hydrogenases. Required for nickel insertion into the metal center of the hydrogenase. In Klebsiella pneumoniae (strain 342), this protein is Hydrogenase maturation factor HypA.